Here is a 267-residue protein sequence, read N- to C-terminus: Acryloyl-CoA reductase electron transfer subunit gamma (267 aa).

In terms of assembly, heterohexadecamer; tetramer of tetramers. Each tetramer is composed of 2 alpha (AcrC), a beta (AcrA) and a gamma (AcrB) subunit.

The protein resides in the cytoplasm. In terms of biological role, part of the ETF-acryloyl-CoA reductase complex involved in the pathway of L-alanine fermentation. The electron transfer flavoprotein (ETF) serves as a specific electron acceptor for acryloyl-CoA reductase. This chain is Acryloyl-CoA reductase electron transfer subunit gamma (acrB), found in Anaerotignum propionicum (Clostridium propionicum).